The chain runs to 546 residues: METSSTISIGSCLKEHQKIYKEWFNIADSDGDGRVSGNDATKFFAMSKLSRQELKQVWAVADSKRQGFLGLSEFITAMKLVSLAQEGHEITSDLLKGSIDMKSVELPVLEGLENVVSKQKVSKTNVDVEDNVVTKPQVTAKTPWFKSKSIIKPQVNVVTIVDGLKRLYTEKLKPLEVTYRFNDFASPVLTSSDFDAKPMVMLLGQYSTGKTTFIKHLLGCDYPGAHIGPEPTTDRFVVAMSGPDERTIPGNTMAVQADMPFNGLTSFGGAFLSKFECSQMPHPVLDQITLVDTPGVLSGEKQRMQRSYDFTGVISWFASKCDMILLLFDPHKLDISDEFKRVITSLRGNEDKIRVVLNKADQVDTQQLMRVYGALMWSLGKVLNTPEVVRVYIGSFNDKPINEVAVGPIGKELFEKEQNDLLADLMDVPKKACDRKINEFVKRARSAKINAYIMSHLKKEMPAMMGKSKAQQRLMDNLEEEFGKVQREFHLPAGDFPSVEHFREVLGGYNIDKFEKLKPKMIQAVDDMLGYDIPDLLKKFRNPYDN.

EF-hand domains follow at residues 15–50 (EHQK…SKLS) and 51–84 (RQEL…VSLA). In terms of domain architecture, EH spans 16 to 94 (HQKIYKEWFN…QEGHEITSDL (79 aa)). D28, D30, D32, R34, D39, D62, and E73 together coordinate Ca(2+). Residues 194-430 (FDAKPMVMLL…LLADLMDVPK (237 aa)) form the Dynamin-type G domain. The interval 204–211 (GQYSTGKT) is G1 motif. Residue 204-211 (GQYSTGKT) participates in GTP binding. Residues 230–231 (EP) are G2 motif. The interval 292-295 (DTPG) is G3 motif. GTP contacts are provided by residues 292–296 (DTPGV) and K359. The interval 358–361 (NKAD) is G4 motif. V382 is a region of interest (G5 motif). Residue 395–398 (SFND) participates in GTP binding. The short motif at 429 to 436 (PKKACDRK) is the Nuclear localization signal element. A coiled-coil region spans residues 467 to 490 (KSKAQQRLMDNLEEEFGKVQREFH).

It belongs to the TRAFAC class dynamin-like GTPase superfamily. Dynamin/Fzo/YdjA family. EHD subfamily. In terms of assembly, homooligomer, and heterooligomer with EHD1. Interacts with AP-4 complex subunit sigma (At2g19790).

It is found in the endosome membrane. It localises to the cell membrane. The protein localises to the nucleus. The protein resides in the cytoplasm. It catalyses the reaction GTP + H2O = GDP + phosphate + H(+). In terms of biological role, involved in endocytosis negative regulation, probably by influencing actin organization. Acts in early endocytic membrane fusion and membrane trafficking of recycling endosomes. Exhibits an inhibitory effect on endocytosis when over-expressed. The sequence is that of EH domain-containing protein 2 from Arabidopsis thaliana (Mouse-ear cress).